A 77-amino-acid chain; its full sequence is Apelin (77 aa).

A signal peptide spans 1 to 22 (MNLRLCVQALLLLWLSLTAVCG). Positions 23–41 (GSLMPLPDGNGLEDGNVRH) are excised as a propeptide. The interval 43 to 77 (VQPRGSRNGPGPWQGGRRKFRRQRPRLSHKGPMPF) is disordered. Basic residues predominate over residues 58–71 (GRRKFRRQRPRLSH).

It belongs to the apelin family. Several active peptides may be produced by proteolytic processing of the peptide precursor. As to expression, expressed in the brain with highest levels in the frontal cortex, thalamus, hypothalamus and midbrain. Secreted by the mammary gland into the colostrum and the milk.

It localises to the secreted. Its subcellular location is the extracellular space. Its function is as follows. Peptide hormone that functions as endogenous ligand for the G-protein-coupled apelin receptor (APLNR/APJ), that plays a role in cadiovascular homeostasis. Functions as a balanced agonist activating both G(i) protein pathway and beta-arrestin pathway of APLNR. Downstream G proteins activation, apelin can inhibit cAMP production and activate key intracellular effectors such as ERKs. On the other hand, APLNR activation induces beta-arrestin recruitment to the membrane leading to desensitization and internalization of the receptor. Apelin blunts cardiac hypertrophic induction from APLNR on response to pathological stimuli, but also induces myocardial hypertrophy under normal conditions. Apelin-36 dissociates more hardly than (pyroglu)apelin-13 from APLNR. Involved in the regulation of cardiac precursor cell movements during gastrulation and heart morphogenesis. Has an inhibitory effect on cytokine production in response to T-cell receptor/CD3 cross-linking; the oral intake of apelin in the colostrum and the milk might therefore modulate immune responses in neonates. Plays a role in early coronary blood vessels formation. Mediates myocardial contractility in an ERK1/2-dependent manner. May also have a role in the central control of body fluid homeostasis by influencing vasopressin release and drinking behavior. In terms of biological role, (Microbial infection) Endogenous ligand for the apelin receptor (APLNR), an alternative coreceptor with CD4 for HIV-1 infection. Inhibits HIV-1 entry in cells coexpressing CD4 and APLNR. Apelin-36 has a greater inhibitory activity on HIV infection than other synthetic apelin derivatives. The polypeptide is Apelin (Homo sapiens (Human)).